The following is a 98-amino-acid chain: Large ribosomal subunit protein uL23 (98 aa).

The protein belongs to the universal ribosomal protein uL23 family. In terms of assembly, part of the 50S ribosomal subunit. Contacts protein L29, and trigger factor when it is bound to the ribosome.

One of the early assembly proteins it binds 23S rRNA. One of the proteins that surrounds the polypeptide exit tunnel on the outside of the ribosome. Forms the main docking site for trigger factor binding to the ribosome. This is Large ribosomal subunit protein uL23 from Parafrankia sp. (strain EAN1pec).